The following is a 324-amino-acid chain: ATP synthase subunit a 2 (324 aa).

An N-terminal signal peptide occupies residues 1-33 (MKRVNVFRSGVFSRLFALLLPFLLGINGLVYAS). The next 6 membrane-spanning stretches (helical) occupy residues 95 to 115 (HVVM…LVGN), 157 to 177 (LPYL…GLVP), 179 to 199 (GATA…TFFI), 224 to 244 (ALWI…PFAL), 257 to 277 (IVIL…VAMF), and 291 to 311 (IFVA…FIGL).

It belongs to the ATPase A chain family. As to quaternary structure, F-type ATPases have 2 components, CF(1) - the catalytic core - and CF(0) - the membrane proton channel. CF(1) has five subunits: alpha(3), beta(3), gamma(1), delta(1), epsilon(1). CF(0) has four main subunits: a, b, b' and c.

The protein resides in the cell inner membrane. Its function is as follows. Key component of the proton channel; it plays a direct role in the translocation of protons across the membrane. The sequence is that of ATP synthase subunit a 2 from Prosthecochloris aestuarii (strain DSM 271 / SK 413).